The sequence spans 122 residues: Ribosome-binding factor A (122 aa).

The protein belongs to the RbfA family. As to quaternary structure, monomer. Binds 30S ribosomal subunits, but not 50S ribosomal subunits or 70S ribosomes.

It is found in the cytoplasm. Functionally, one of several proteins that assist in the late maturation steps of the functional core of the 30S ribosomal subunit. Associates with free 30S ribosomal subunits (but not with 30S subunits that are part of 70S ribosomes or polysomes). Required for efficient processing of 16S rRNA. May interact with the 5'-terminal helix region of 16S rRNA. In Cupriavidus pinatubonensis (strain JMP 134 / LMG 1197) (Cupriavidus necator (strain JMP 134)), this protein is Ribosome-binding factor A.